The following is a 664-amino-acid chain: DNA mismatch repair protein MutL (664 aa).

This sequence belongs to the DNA mismatch repair MutL/HexB family.

This protein is involved in the repair of mismatches in DNA. It is required for dam-dependent methyl-directed DNA mismatch repair. May act as a 'molecular matchmaker', a protein that promotes the formation of a stable complex between two or more DNA-binding proteins in an ATP-dependent manner without itself being part of a final effector complex. This Clostridium beijerinckii (strain ATCC 51743 / NCIMB 8052) (Clostridium acetobutylicum) protein is DNA mismatch repair protein MutL.